Here is a 431-residue protein sequence, read N- to C-terminus: MTKKVCSCINELPDDLILKILSFVSTKHVVVTSLLSKKWKSLWTRVPILKYDVRDHTRFERFLDKSLFSHQSHVLESLHVELSVTLWNKDIGPWIRTALHHHHCHLRELEIDACIVHTVLPPELFTCKTLVVLKLKGIVIDVEAPLTTVSLPSLKTLHIDHSSLFDFGSLQMLLSNCNFITDLMVIRESRFFFAEYDVSWCKTLMALKLEGLKDVISISSSSAVCLPLLKTLHVARMEDFNNDSFCRLLSNCPVLSDLTLEEKTSDVLLNLDIDMPYLQRLSIITRVDADSKHIFSLMKNYTRKLAIIAPSFKYFSIQELAYASRYRYIVRVRLGVPSKLEDASTFSRIVHLELSICSERSVEMLVDLLLCFTKLVVLKLEHVYLLTPLGRWEPPSLVPECLLSSLEALEWKGYTGRYGDKDLRSNRLKRT.

An F-box domain is found at 6 to 62 (CSCINELPDDLILKILSFVSTKHVVVTSLLSKKWKSLWTRVPILKYDVRDHTRFERF). LRR repeat units lie at residues 56–82 (HTRF…HVEL), 88–113 (NKDI…EIDA), 135–161 (LKGI…HIDH), 162–187 (SSLF…MVIR), 209–236 (LEGL…HVAR), 237–262 (MEDF…TLEE), 264–285 (TSDV…SIIT), and 357–382 (CSER…KLEH). In terms of domain architecture, FBD spans 391–423 (RWEPPSLVPECLLSSLEALEWKGYTGRYGDKDL).

In Arabidopsis thaliana (Mouse-ear cress), this protein is Putative F-box/FBD/LRR-repeat protein At3g56780.